The primary structure comprises 151 residues: 3-hydroxyacyl-[acyl-carrier-protein] dehydratase FabZ (151 aa).

The active site involves His-58.

This sequence belongs to the thioester dehydratase family. FabZ subfamily.

The protein localises to the cytoplasm. It catalyses the reaction a (3R)-hydroxyacyl-[ACP] = a (2E)-enoyl-[ACP] + H2O. Its function is as follows. Involved in unsaturated fatty acids biosynthesis. Catalyzes the dehydration of short chain beta-hydroxyacyl-ACPs and long chain saturated and unsaturated beta-hydroxyacyl-ACPs. This chain is 3-hydroxyacyl-[acyl-carrier-protein] dehydratase FabZ, found in Histophilus somni (strain 129Pt) (Haemophilus somnus).